A 287-amino-acid polypeptide reads, in one-letter code: Mitochondrial dicarboxylate carrier (287 aa).

Solcar repeat units follow at residues 7–87 (SRWY…MRDY), 100–187 (NKVL…AKQL), and 196–279 (DNIF…LRKH). 3 helical membrane-spanning segments follow: residues 9-29 (WYFG…LDLL), 62-81 (GLSA…FAIY), and 102-122 (VLLG…ADLV). The residue at position 158 (lysine 158) is an N6-acetyllysine. 3 helical membrane passes run 162–181 (GATM…LSCY), 202–222 (FVSS…LDVL), and 254–274 (GLFP…MFLE).

Belongs to the mitochondrial carrier (TC 2.A.29) family. In terms of tissue distribution, expressed at very high levels in white adipose tissue. And at low levels in brown adipose tissue, kidney and liver.

The protein resides in the mitochondrion inner membrane. The enzyme catalyses (S)-malate(in) + phosphate(out) = (S)-malate(out) + phosphate(in). It carries out the reaction malonate(out) + (S)-malate(in) = malonate(in) + (S)-malate(out). The catalysed reaction is (S)-malate(in) + succinate(out) = (S)-malate(out) + succinate(in). It catalyses the reaction (S)-malate(in) + sulfate(out) = (S)-malate(out) + sulfate(in). The enzyme catalyses malonate(out) + phosphate(in) = malonate(in) + phosphate(out). It carries out the reaction succinate(out) + phosphate(in) = succinate(in) + phosphate(out). The catalysed reaction is sulfate(out) + phosphate(in) = sulfate(in) + phosphate(out). It catalyses the reaction malonate(out) + succinate(in) = malonate(in) + succinate(out). With respect to regulation, regulated by circadian protein CLOCK (Circadian Locomotor Output Cycles Kaput). In terms of biological role, catalyzes the electroneutral exchange or flux of physiologically important metabolites such as dicarboxylates (malonate, malate, succinate), inorganic sulfur-containing anions, and phosphate, across mitochondrial inner membrane. Plays an important role in gluconeogenesis, fatty acid metabolism, urea synthesis, and sulfur metabolism, particularly in liver, by supplying the substrates for the different metabolic processes. Regulates fatty acid release from adipocytes, and contributes to systemic insulin sensitivity. The protein is Mitochondrial dicarboxylate carrier of Mus musculus (Mouse).